A 209-amino-acid chain; its full sequence is Uracil phosphoribosyltransferase (209 aa).

Residues R79, R104, and 131–139 (DPMLATGGS) contribute to the 5-phospho-alpha-D-ribose 1-diphosphate site. Uracil contacts are provided by residues I194 and 199-201 (GDA). D200 lines the 5-phospho-alpha-D-ribose 1-diphosphate pocket.

The protein belongs to the UPRTase family. It depends on Mg(2+) as a cofactor.

It catalyses the reaction UMP + diphosphate = 5-phospho-alpha-D-ribose 1-diphosphate + uracil. It participates in pyrimidine metabolism; UMP biosynthesis via salvage pathway; UMP from uracil: step 1/1. Its activity is regulated as follows. Allosterically activated by GTP. Catalyzes the conversion of uracil and 5-phospho-alpha-D-ribose 1-diphosphate (PRPP) to UMP and diphosphate. The protein is Uracil phosphoribosyltransferase of Listeria innocua serovar 6a (strain ATCC BAA-680 / CLIP 11262).